The following is a 205-amino-acid chain: uncharacterized protein (205 aa).

The interval 72–114 is disordered; sequence ARVSPYGYESDSENEEYTRISSATSSNVLTDSPTTTQDDPTGR. Over residues 90–100 the composition is skewed to polar residues; sequence RISSATSSNVL. Residues 101-110 show a composition bias toward low complexity; sequence TDSPTTTQDD.

This is an uncharacterized protein from Equus caballus (Horse).